A 315-amino-acid polypeptide reads, in one-letter code: Protein sprouty homolog 2 (315 aa).

Over residues 1–15 (MEARAQSGNGSQPLL) the composition is skewed to polar residues. The interval 1–140 (MEARAQSGNG…SEQRLLGSSF (140 aa)) is disordered. The span at 20 to 32 (DGGRPRGEPDPRD) shows a compositional bias: basic and acidic residues. Over residues 108-140 (SRSISTVSSGSRSSTRTSTSSSSSEQRLLGSSF) the composition is skewed to low complexity. A required for interaction with CAV1 region spans residues 118–315 (SRSSTRTSTS…VPRRNFEKPT (198 aa)). The SPR domain maps to 177–291 (RCEDCGKCKC…CYDRVNRPGC (115 aa)). Residues 178–315 (CEDCGKCKCK…VPRRNFEKPT (138 aa)) form a required for interaction with TESK1 region.

It belongs to the sprouty family. As to quaternary structure, forms heterodimers with SPRY1. Forms a tripartite complex containing GAB1, METTL13 and SPRY2. Within the complex interacts with METTL13. Interacts with RAF1. Interacts (via C-terminus) with TESK1 (via C-terminus); the interaction disrupts SPRY2 interaction with GRB2, potentially via disruption of SPRY2 serine dephosphorylation. Interacts with PPP2R1A/PP2A-A and PPP2CA/PP2A-C; the interaction with PPP2CA/PP2A-C is inhibited by interaction with TESK1, possibly by vesicular sequestration of SPRY2. Inhibition of the interaction with the serine/threonine-protein phosphatase 2A (PP2A) holoenzyme results in loss of PP2A-mediated dephosphorylation, resulting in the loss of SPRY2 interaction with GRB2. Interacts with GRB2. Interacts with CBL/C-CBL; the interaction inhibits CBL-mediated ubiquitination of EGFR. Interacts (via C-terminus) with CAV1 (via C-terminus). Cleaved at Pro-144 by the prolyl endopeptidase FAP (seprase) activity (in vitro).

The protein resides in the cytoplasm. It is found in the cytoskeleton. It localises to the cell projection. The protein localises to the ruffle membrane. Its function is as follows. Antagonist of fibroblast growth factor (FGF) pathways via inhibition of FGF-mediated phosphorylation of ERK1/2. Thereby acts as an antagonist of FGF-induced retinal lens fiber differentiation, may inhibit limb bud outgrowth and may negatively modulate respiratory organogenesis. Inhibits TGFB-induced epithelial-to-mesenchymal transition in retinal lens epithelial cells. Inhibits CBL/C-CBL-mediated EGFR ubiquitination. In Pongo abelii (Sumatran orangutan), this protein is Protein sprouty homolog 2 (SPRY2).